Here is a 207-residue protein sequence, read N- to C-terminus: dTTP/UTP pyrophosphatase (207 aa).

Asp79 (proton acceptor) is an active-site residue.

Belongs to the Maf family. YhdE subfamily. A divalent metal cation is required as a cofactor.

It localises to the cytoplasm. The enzyme catalyses dTTP + H2O = dTMP + diphosphate + H(+). It catalyses the reaction UTP + H2O = UMP + diphosphate + H(+). Nucleoside triphosphate pyrophosphatase that hydrolyzes dTTP and UTP. May have a dual role in cell division arrest and in preventing the incorporation of modified nucleotides into cellular nucleic acids. This chain is dTTP/UTP pyrophosphatase, found in Rhodopseudomonas palustris (strain BisB5).